Here is a 165-residue protein sequence, read N- to C-terminus: Endoribonuclease YbeY (165 aa).

Zn(2+)-binding residues include histidine 130, histidine 134, and histidine 140.

Belongs to the endoribonuclease YbeY family. It depends on Zn(2+) as a cofactor.

The protein resides in the cytoplasm. Functionally, single strand-specific metallo-endoribonuclease involved in late-stage 70S ribosome quality control and in maturation of the 3' terminus of the 16S rRNA. The protein is Endoribonuclease YbeY of Streptococcus gordonii (strain Challis / ATCC 35105 / BCRC 15272 / CH1 / DL1 / V288).